Reading from the N-terminus, the 146-residue chain is Large ribosomal subunit protein uL16c (146 aa).

This sequence belongs to the universal ribosomal protein uL16 family. Part of the 50S ribosomal subunit.

The protein resides in the plastid. It localises to the chloroplast. This is Large ribosomal subunit protein uL16c from Angiopteris evecta (Mule's foot fern).